The chain runs to 405 residues: 8-amino-7-oxononanoate synthase (405 aa).

R23 is a substrate binding site. 114–115 (GY) provides a ligand contact to pyridoxal 5'-phosphate. H139 is a substrate binding site. Positions 185, 213, and 245 each coordinate pyridoxal 5'-phosphate. An N6-(pyridoxal phosphate)lysine modification is found at K248. Substrate is bound at residue T366.

It belongs to the class-II pyridoxal-phosphate-dependent aminotransferase family. BioF subfamily. As to quaternary structure, homodimer. Pyridoxal 5'-phosphate serves as cofactor.

It catalyses the reaction 6-carboxyhexanoyl-[ACP] + L-alanine + H(+) = (8S)-8-amino-7-oxononanoate + holo-[ACP] + CO2. The protein operates within cofactor biosynthesis; biotin biosynthesis. Catalyzes the decarboxylative condensation of pimeloyl-[acyl-carrier protein] and L-alanine to produce 8-amino-7-oxononanoate (AON), [acyl-carrier protein], and carbon dioxide. In Delftia acidovorans (strain DSM 14801 / SPH-1), this protein is 8-amino-7-oxononanoate synthase.